We begin with the raw amino-acid sequence, 396 residues long: Acetate kinase (396 aa).

Asn7 serves as a coordination point for Mg(2+). Lys14 is an ATP binding site. A substrate-binding site is contributed by Arg88. Residue Asp145 is the Proton donor/acceptor of the active site. ATP is bound by residues 205–209 (HLGNG), 279–281 (DFR), and 327–331 (GIGEN). Glu381 is a binding site for Mg(2+).

The protein belongs to the acetokinase family. In terms of assembly, homodimer. Mg(2+) serves as cofactor. Requires Mn(2+) as cofactor.

It is found in the cytoplasm. The enzyme catalyses acetate + ATP = acetyl phosphate + ADP. Its pathway is metabolic intermediate biosynthesis; acetyl-CoA biosynthesis; acetyl-CoA from acetate: step 1/2. Its function is as follows. Catalyzes the formation of acetyl phosphate from acetate and ATP. Can also catalyze the reverse reaction. The sequence is that of Acetate kinase from Campylobacter jejuni subsp. doylei (strain ATCC BAA-1458 / RM4099 / 269.97).